Here is a 378-residue protein sequence, read N- to C-terminus: Mating-type protein MAT-1 (378 aa).

A DNA-binding region (alpha box) is located at residues 60–117; it reads KAKKALNAFVGFRCYYIAIPAFKPWPMKKLSNLISLLWEGDPNKSLWSLMAKAWSNIR. The tract at residues 235 to 256 is disordered; sequence SQVDQARVAARNRRRAKRQSAR. A compositionally biased stretch (basic residues) spans 244 to 253; that stretch reads ARNRRRAKRQ.

Belongs to the MATALPHA1 family.

The protein resides in the nucleus. Its function is as follows. Mating type proteins are sequence specific DNA-binding proteins that act as master switches in fungal differentiation by controlling gene expression in a cell type-specific fashion. Transcriptional activator that induces the transcription of alpha-specific genes. In Cochliobolus ellisii (Curvularia ellisii), this protein is Mating-type protein MAT-1 (MAT1).